We begin with the raw amino-acid sequence, 219 residues long: MKSFTGTTQKCTVCEKTVYLVDKLVANQRVYHKACFRCHHCNSTLKLSNFNSFDGVVYCRHHFDQLFKRTGSLEKSFDGTPKFKPERTFSQETQSANRLSSFFEGTRDKCNACAKIVYPIERVKVDGTAYHRACFKCCHGGCTISPSNYIAHEGRLYCKHHHIQLFKKKGNYSQLEVEETVAAPAESETQNTETQNAETQNADTQNADTQNTETQNGSV.

LIM zinc-binding domains follow at residues 9–109 (QKCT…TRDK) and 110–167 (CNAC…QLFK). The segment at 181–219 (VAAPAESETQNTETQNAETQNADTQNADTQNTETQNGSV) is disordered. Over residues 185 to 202 (AESETQNTETQNAETQNA) the composition is skewed to low complexity. The segment covering 203 to 219 (DTQNADTQNTETQNGSV) has biased composition (polar residues).

As to expression, pollen.

Could possibly involved in controlling pollen-specific processes such as male gamete maturation, pollen tube formation, or even fertilization. This chain is Pollen-specific protein SF3 (SF3), found in Helianthus annuus (Common sunflower).